Reading from the N-terminus, the 2171-residue chain is Mediator of DNA damage checkpoint protein 1 (2171 aa).

Residues 1 to 19 (MEDTQAIDWDVEEEEETEQ) are compositionally biased toward acidic residues. The tract at residues 1–22 (MEDTQAIDWDVEEEEETEQSSE) is disordered. The tract at residues 1 to 150 (MEDTQAIDWD…SRGPLTVEET (150 aa)) is interaction with CHEK2. An interaction with the MRN complex region spans residues 2 to 220 (EDTQAIDWDV…PFAFNLNSDT (219 aa)). Thr-4 carries the post-translational modification Phosphothreonine. The 52-residue stretch at 54–105 (NVVGRMPDCSVALPFPSISKQHAEIEILAWDKAPILRDCGSLNGTQILRPPK) folds into the FHA domain. Ser-108 carries the phosphoserine modification. Residues 145-568 (LTVEETPRVQ…PAKLLVVSLE (424 aa)) are required for nuclear localization (NLS1). Thr-146 is subject to Phosphothreonine. A phosphoserine mark is found at Ser-168, Ser-176, Ser-196, and Ser-218. Disordered regions lie at residues 185 to 248 (RTTS…AKQS) and 261 to 317 (DQPL…AEVH). A Phosphothreonine modification is found at Thr-220. Residues 261–278 (DQPLVKERDDDTKVKRGA) are compositionally biased toward basic and acidic residues. A Phosphoserine modification is found at Ser-299. Thr-301 carries the post-translational modification Phosphothreonine. The span at 306–317 (DSRPPGRPAEVH) shows a compositional bias: basic and acidic residues. Position 329 is a phosphoserine (Ser-329). At Thr-331 the chain carries Phosphothreonine. The segment at 355–387 (GVGTRGPGAPGLAHLQESQAGSDTDVEEGKAPQ) is disordered. Phosphoserine occurs at positions 372 and 376. Residue Thr-378 is modified to Phosphothreonine. Ser-394, Ser-397, and Ser-402 each carry phosphoserine. Thr-404 is modified (phosphothreonine). Ser-411 bears the Phosphoserine mark. Disordered regions lie at residues 443-469 (QRSQTTTERDSDTDVEEEELPVENREA) and 481-522 (VRAH…VDIN). Thr-449 is subject to Phosphothreonine. At Ser-453 the chain carries Phosphoserine. Thr-455 carries the post-translational modification Phosphothreonine. Phosphoserine occurs at positions 485, 495, 498, 504, 505, and 513. Polar residues predominate over residues 513–522 (SQASTTVDIN). The residue at position 523 (Thr-523) is a Phosphothreonine. The residue at position 590 (Ser-590) is a Phosphoserine. A Glycyl lysine isopeptide (Lys-Gly) (interchain with G-Cter in SUMO1); alternate cross-link involves residue Lys-616. A Glycyl lysine isopeptide (Lys-Gly) (interchain with G-Cter in SUMO2); alternate cross-link involves residue Lys-616. 2 disordered regions span residues 653–689 (DTLGESTQPQREGAQVPTGREREQHVGGTKDSEDNYG) and 780–1969 (SPPR…TKLN). The span at 671–685 (GREREQHVGGTKDSE) shows a compositional bias: basic and acidic residues. Ser-780 and Ser-793 each carry phosphoserine. Lys-812 carries the post-translational modification N6-acetyllysine. 4 stretches are compositionally biased toward basic and acidic residues: residues 819-844 (ETAERVGPERGPLERETEKLLPERQT), 851-862 (ELTKGKQDREQK), 868-905 (DTQRQESDKNGESASPERDRESLKVEIETSEEIQEKQV), and 914-951 (AFEREVERPVANRECDPAELEEKVPKVILERDTQRGEP). A phosphoserine mark is found at Ser-955 and Ser-998. Residues 955–964 (SQDQKGQASS) are compositionally biased toward polar residues. Residues 1016-1031 (KASRIRAAEKVSRGDQ) show a composition bias toward basic and acidic residues. Ser-1033 carries the post-translational modification Phosphoserine. Residues 1040–1051 (PTVPEAPAPPQK) show a composition bias toward pro residues. Residues Ser-1068 and Ser-1086 each carry the phosphoserine modification. The span at 1103-1113 (PKPKIRTRKSS) shows a compositional bias: basic residues. Composition is skewed to polar residues over residues 1129–1157 (PSTSTAQPVTPKPTSQATRSRTNRSSVKT) and 1170–1187 (PCTSTDQPVTSEPTSQVT). The interaction with the PRKDC complex stretch occupies residues 1148–1692 (SRTNRSSVKT…TNRSSVKTPE (545 aa)). Thr-1157 carries the post-translational modification Phosphothreonine. Thr-1198 carries the post-translational modification Phosphothreonine. Residues 1210-1227 (QPSTSTDRPVTSEPTSHA) show a composition bias toward polar residues. Ser-1235 is modified (phosphoserine). Thr-1239 is subject to Phosphothreonine. Residues 1251 to 1268 (QPSTSTDQPVTSEPTYQA) show a composition bias toward polar residues. A phosphothreonine mark is found at Thr-1280 and Thr-1302. The span at 1306-1318 (TSRTTRSRTNMSS) shows a compositional bias: low complexity. Composition is skewed to polar residues over residues 1334–1350 (PSTSTEQPVTPEPTSRA) and 1375–1403 (PSTSTDQPVTPEPTSQATRGRTNRSSVKT). The segment covering 1429–1441 (TSRTTRSRTNMSS) has biased composition (low complexity). Residues 1457 to 1473 (PSTSTEQPVTPEPTSRA) show a composition bias toward polar residues. 2 positions are modified to phosphoserine: Ser-1481 and Ser-1482. At Lys-1484 the chain carries N6-acetyllysine. Thr-1485 carries the post-translational modification Phosphothreonine. Residue Lys-1495 forms a Glycyl lysine isopeptide (Lys-Gly) (interchain with G-Cter in SUMO1); alternate linkage. Lys-1495 participates in a covalent cross-link: Glycyl lysine isopeptide (Lys-Gly) (interchain with G-Cter in SUMO2); alternate. 3 stretches are compositionally biased toward polar residues: residues 1498–1526 (PSTSTDQPVTPEPTSQATRGRTNRSSVKT), 1538–1557 (QPSTSTDQPVTPEPTSQVTR), and 1580–1596 (ASASTDQPVTSEPTSRT). A phosphothreonine mark is found at Thr-1507 and Thr-1548. Phosphothreonine is present on residues Thr-1615 and Thr-1630. Polar residues-rich tracts occupy residues 1620-1649 (QPSTSTDQPVTPEPTSQATRGRTNRSSVKT) and 1661-1678 (QPSTSRNQLVTPEPTSRA). Phosphoserine is present on Ser-1646. Phosphothreonine occurs at positions 1649 and 1671. Ser-1686 bears the Phosphoserine mark. A Phosphothreonine modification is found at Thr-1690. Residues 1693–1702 (PVVPTAPEPH) show a composition bias toward pro residues. Positions 1706–1718 (STDQPVTPKLTSR) are enriched in polar residues. Thr-1712, Thr-1746, and Thr-1753 each carry phosphothreonine. Residues 1760-1771 (GGQSKTLRSSTV) show a composition bias toward polar residues. At Ser-1763 the chain carries Phosphoserine. Thr-1779 bears the Phosphothreonine mark. Over residues 1780–1801 (PEFQSPVTTDQPISPEPITQPS) the composition is skewed to polar residues. The interval 1780 to 2171 (PEFQSPVTTD…VLSPLEMSST (392 aa)) is required for nuclear localization (NLS2). Ser-1784 and Ser-1793 each carry phosphoserine. Residue Lys-1822 forms a Glycyl lysine isopeptide (Lys-Gly) (interchain with G-Cter in SUMO2) linkage. Phosphoserine is present on Ser-1857. Lys-1872 is covalently cross-linked (Glycyl lysine isopeptide (Lys-Gly) (interchain with G-Cter in SUMO2)). Thr-1882 carries the post-translational modification Phosphothreonine. Ser-1902 carries the phosphoserine modification. Polar residues predominate over residues 1905 to 1918 (HQKQPQRGEVSQKT). Residue Lys-1922 forms a Glycyl lysine isopeptide (Lys-Gly) (interchain with G-Cter in SUMO1); alternate linkage. Lys-1922 participates in a covalent cross-link: Glycyl lysine isopeptide (Lys-Gly) (interchain with G-Cter in SUMO2); alternate. Residues 1929 to 1939 (AEKPGKEEDVV) are compositionally biased toward basic and acidic residues. A Phosphothreonine modification is found at Thr-1940. BRCT domains lie at 1974–2052 (APKV…EYVV) and 2073–2164 (RERR…FVLS). Arg-2025 is subject to Omega-N-methylarginine.

Homodimer. Interacts with H2AX, which requires phosphorylation of H2AX on 'Ser-139'. Interacts with the MRN complex, composed of MRE11, RAD50, and NBN. Interacts with CHEK2, which requires ATM-mediated phosphorylation of 'Thr-68' within the FHA domain of CHEK2. Interacts constitutively with the BRCA1-BARD1 complex, SMC1A and TP53BP1. Interacts with ATM and FANCD2, and these interactions are reduced upon DNA damage. Also interacts with the PRKDC complex, composed of XRCC6/KU70, XRCC5/KU80 and PRKDC/XRCC7. This interaction may be required for PRKDC autophosphorylation, which is essential for DNA double strand break (DSB) repair. When phosphorylated by ATM, interacts with RNF8 (via FHA domain). Interacts with CEP164. When phosphorylated, interacts with APTX (via FHA-like domain). Interacts (when phosphorylated) with TOPBP1; promoting TOPBP1 localization to DNA damage sites during mitosis. Interacts (when phosphorylated) with NBN; promoting NBN and MRN complex localization to DNA damage sites. Phosphorylated upon exposure to ionizing radiation (IR), ultraviolet radiation (UV), and hydroxyurea (HU). Phosphorylation in response to IR requires ATM, NBN, and possibly CHEK2. Also phosphorylated during the G2/M phase of the cell cycle and during activation of the mitotic spindle checkpoint. Phosphorylation at Thr-4 by ATM stabilizes and enhances homodimerization via the FHA domain. Phosphorylated at Ser-168 and Ser-196 by CK2 in response to DNA damage during mitosis, promoting interaction with TOPBP1. Phosphorylated by CK2 in response to DNA damage, promoting interaction with NBN and recruitment of the MRN complex to DNA damage sites. In terms of processing, sumoylation at Lys-1922 by PIAS4 following DNA damage promotes ubiquitin-mediated degradation. Post-translationally, ubiquitinated by RNF4, leading to proteasomal degradation; undergoes 'Lys-48'-linked polyubiquitination.

The protein resides in the nucleus. The protein localises to the chromosome. In terms of biological role, histone reader protein required for checkpoint-mediated cell cycle arrest in response to DNA damage within both the S phase and G2/M phases of the cell cycle. Specifically recognizes and binds histone H2AX phosphorylated at 'Ser-139', a marker of DNA damage, serving as a scaffold for the recruitment of DNA repair and signal transduction proteins to discrete foci of DNA damage sites. Also required for downstream events subsequent to the recruitment of these proteins. These include phosphorylation and activation of the ATM, CHEK1 and CHEK2 kinases, and stabilization of TP53/p53 and apoptosis. ATM and CHEK2 may also be activated independently by a parallel pathway mediated by TP53BP1. Required for chromosomal stability during mitosis by promoting recruitment of TOPBP1 to DNA double strand breaks (DSBs): TOPBP1 forms filamentous assemblies that bridge MDC1 and tether broken chromosomes during mitosis. Required for the repair of DSBs via homologous recombination by promoting recruitment of NBN component of the MRN complex to DSBs. In Pan troglodytes (Chimpanzee), this protein is Mediator of DNA damage checkpoint protein 1 (MDC1).